A 58-amino-acid polypeptide reads, in one-letter code: ATP synthase F(0) complex subunit k, mitochondrial (58 aa).

Lys16 and Lys17 each carry N6-acetyllysine. A helical membrane pass occupies residues 23–45; the sequence is TLTGRMNCVLATYGGIALLVLYF.

In terms of assembly, component of the ATP synthase complex composed at least of ATP5F1A/subunit alpha, ATP5F1B/subunit beta, ATP5MC1/subunit c (homooctomer), MT-ATP6/subunit a, MT-ATP8/subunit 8, ATP5ME/subunit e, ATP5MF/subunit f, ATP5MG/subunit g, ATP5MK/subunit k, ATP5MJ/subunit j, ATP5F1C/subunit gamma, ATP5F1D/subunit delta, ATP5F1E/subunit epsilon, ATP5PF/subunit F6, ATP5PB/subunit b, ATP5PD/subunit d, ATP5PO/subunit OSCP. ATP synthase complex consists of a soluble F(1) head domain (subunits alpha(3) and beta(3)) - the catalytic core - and a membrane F(0) domain - the membrane proton channel (subunits c, a, 8, e, f, g, k and j). These two domains are linked by a central stalk (subunits gamma, delta, and epsilon) rotating inside the F1 region and a stationary peripheral stalk (subunits F6, b, d, and OSCP). The ATP synthase complex/complex V exists as a monomeric and a dimeric supercomplex that helps shape mitochondrial cristae to optimize proton flow. As to expression, ubiquitous. Highly expressed in skeletal and cardiac muscle. Moderately expressed in brain, thymus, stomach and testis. Lowest expression levels were detected in lung, liver, kidney, adrenal gland, spleen, small intestine and adipose tissue. In streptozotocin-induced diabetes, the insulin-sensitive tissues skeletal and cardiac muscle were down-regulated.

The protein localises to the mitochondrion membrane. Its function is as follows. Subunit k, of the mitochondrial membrane ATP synthase complex (F(1)F(0) ATP synthase or Complex V) that produces ATP from ADP in the presence of a proton gradient across the membrane which is generated by electron transport complexes of the respiratory chain. ATP synthase complex consist of a soluble F(1) head domain - the catalytic core - and a membrane F(1) domain - the membrane proton channel. These two domains are linked by a central stalk rotating inside the F(1) region and a stationary peripheral stalk. During catalysis, ATP synthesis in the catalytic domain of F(1) is coupled via a rotary mechanism of the central stalk subunits to proton translocation. In vivo, can only synthesize ATP although its ATP hydrolase activity can be activated artificially in vitro. Part of the complex F(0) domain. Required for dimerization of the ATP synthase complex and as such regulates ATP synthesis in the mitochondria. This Rattus norvegicus (Rat) protein is ATP synthase F(0) complex subunit k, mitochondrial (Atp5mk).